The chain runs to 1478 residues: MSSFNKKIAKDIKKIKISLAAQDDVKNWSCGEVTKPETINYKSYKPERDGLFDELIFGPTTDFKCPICGTKYKKSDENTICEKTPMCQKYQPVILPKMVRRSRMGHIHLENPVVHFWFFKIDHSIISKLLGLRIANSNKTVSKGDLEKLIYYKSHIVLEDGGLKKLQKNAIIDISDAAIIYADALEELKERFEKDTEEYEIISEALAELESYAVSQTGQDYGIDFYEYNEIIHEFSKAKISTGSKAIEYLLENIDLKAEAEFIESEIEKINQHFDNNPTASIKAQERSKLYKRLAVVNAFIHSGQDPKSMLIYDLPVIPADLRPLVQLDGGRHSTSDVNELYRRIIIRNNRLKKWEETDAPMLIKQNEFRMIQEAVDALIDNSRKKPAPVTSKDNRPLKSISDTLTRKKGRFRQNLLGKRVDYSGRSVIVVGPELKMHQVGVPREMAAKLFEPWIIKELINGDSHINSIKAGKKAIENLDPIIWPYVEKAIEGKVVLLNRAPTLHRLSIQAYEPVLIRGKAIKLHPLSCTPFNADFDGDQMAIHVPISEEAVREARELMLASKNILGPKDGEPIINPAQDIILGLYYLTMEKAAAIDGDKVVGEGKFFATYDEMLLAYENKLVSLHARIALPISEINKKRLNYSPENKYIISTVGKFIFNRAFPESFEFIFGKHVEYVNKTDANGEVKLSEKEVVYTSNNKNQLEQFLLPYGQNFAEVIAKMPLNLPLSKKDVAKIVRRVYDKYVAIVTKSDVASVINQINANEINQIFDLCAELKDFNGKPIDVNHVEILEKIIVEEYKAISQEIIVRERTEEPIWTVNDYTKLLEIVWFKYTNIVANVLDNIKELGYKFSTISGTTISISDVITHQDTKSRIAEGDKYIELLKDYFDQGLMTDDERYNATIAKWAAIKDDIEKDLKKLTKLYPDNSLFMMFNSGARGNSSNFVQLAGMRGLMNNNTKVLKADAENERVVRSTVEIPVKSSFLNGLTAYEFYSSTHGARKGLTDTALNTAKSGYLTRRLVDVAQGITVREDDCGTDYGFQVKDILDTKTNTVIEALYDRIEGRFTNKAIYDKNGKLIVDADELITPEIATEIVENGIKKVEIRSVLSCYTPNGVCKKCYGKDLALNRVVNIGEAVGVIAAQSIGEPGTQLTMRTFHTGGVAGVEDITGGFGRLIELIDAYDSPWGRPAVIANYYGRITDIKRVKEGSESVEYDVITQEYKTRDGKVNTVEYKTRAGRKIRVKINDKVTPGQKIVEGPIVLNNLLRVGDTRLVQNYILKEVQKLYRLQGITISDKYIEIIIRQMLSKILITDSGDSDFFNGSLVDIHVYQKESARLISEGKKPPFGEVKIKGAKQIPLLSDSFLAAASYQETPKILVNASIKAQVDRLKGLKENIILGHKIPAGTNSNFEENGKYDLRNPKSYFADKYDPDIKTVKFVADENEILNMEHRVEIQHIFDEFQSEAFNANVIEFTDDSDN.

Positions 535, 537, and 539 each coordinate Mg(2+). The Zn(2+) site is built by Cys-1034, Cys-1109, Cys-1116, and Cys-1119.

It belongs to the RNA polymerase beta' chain family. As to quaternary structure, the RNAP catalytic core consists of 2 alpha, 1 beta, 1 beta' and 1 omega subunit. When a sigma factor is associated with the core the holoenzyme is formed, which can initiate transcription. Mg(2+) is required as a cofactor. Zn(2+) serves as cofactor.

The catalysed reaction is RNA(n) + a ribonucleoside 5'-triphosphate = RNA(n+1) + diphosphate. Functionally, DNA-dependent RNA polymerase catalyzes the transcription of DNA into RNA using the four ribonucleoside triphosphates as substrates. The protein is DNA-directed RNA polymerase subunit beta' of Mycoplasmopsis agalactiae (strain NCTC 10123 / CIP 59.7 / PG2) (Mycoplasma agalactiae).